The primary structure comprises 82 residues: RNA-binding protein Hfq (82 aa).

The 61-residue stretch at 11 to 71 (DTFLNSVRKS…ISTIMPAQPV (61 aa)) folds into the Sm domain.

Belongs to the Hfq family. Homohexamer.

In terms of biological role, RNA chaperone that binds small regulatory RNA (sRNAs) and mRNAs to facilitate mRNA translational regulation in response to envelope stress, environmental stress and changes in metabolite concentrations. Also binds with high specificity to tRNAs. This chain is RNA-binding protein Hfq, found in Caulobacter vibrioides (strain ATCC 19089 / CIP 103742 / CB 15) (Caulobacter crescentus).